We begin with the raw amino-acid sequence, 108 residues long: UPF0060 membrane protein BLi00854/BL03049 (108 aa).

The next 4 helical transmembrane spans lie at 3–23, 31–51, 60–80, and 86–106; these read IAIG…YLVW, PLWY…IPAF, VYAA…WLVD, and LYDW…LWAP.

This sequence belongs to the UPF0060 family.

The protein localises to the cell membrane. This Bacillus licheniformis (strain ATCC 14580 / DSM 13 / JCM 2505 / CCUG 7422 / NBRC 12200 / NCIMB 9375 / NCTC 10341 / NRRL NRS-1264 / Gibson 46) protein is UPF0060 membrane protein BLi00854/BL03049.